A 328-amino-acid polypeptide reads, in one-letter code: Phosphate acyltransferase (328 aa).

The protein belongs to the PlsX family. As to quaternary structure, homodimer. Probably interacts with PlsY.

The protein resides in the cytoplasm. It carries out the reaction a fatty acyl-[ACP] + phosphate = an acyl phosphate + holo-[ACP]. It functions in the pathway lipid metabolism; phospholipid metabolism. Functionally, catalyzes the reversible formation of acyl-phosphate (acyl-PO(4)) from acyl-[acyl-carrier-protein] (acyl-ACP). This enzyme utilizes acyl-ACP as fatty acyl donor, but not acyl-CoA. The chain is Phosphate acyltransferase from Geobacillus thermodenitrificans (strain NG80-2).